The chain runs to 172 residues: Large ribosomal subunit protein uL10 (172 aa).

It belongs to the universal ribosomal protein uL10 family. In terms of assembly, part of the ribosomal stalk of the 50S ribosomal subunit. The N-terminus interacts with L11 and the large rRNA to form the base of the stalk. The C-terminus forms an elongated spine to which L12 dimers bind in a sequential fashion forming a multimeric L10(L12)X complex.

Functionally, forms part of the ribosomal stalk, playing a central role in the interaction of the ribosome with GTP-bound translation factors. The chain is Large ribosomal subunit protein uL10 from Rhodopseudomonas palustris (strain TIE-1).